The sequence spans 286 residues: 33 kDa chaperonin (286 aa).

Intrachain disulfides connect cysteine 225–cysteine 227 and cysteine 258–cysteine 261.

This sequence belongs to the HSP33 family. In terms of processing, under oxidizing conditions two disulfide bonds are formed involving the reactive cysteines. Under reducing conditions zinc is bound to the reactive cysteines and the protein is inactive.

The protein resides in the cytoplasm. Its function is as follows. Redox regulated molecular chaperone. Protects both thermally unfolding and oxidatively damaged proteins from irreversible aggregation. Plays an important role in the bacterial defense system toward oxidative stress. The protein is 33 kDa chaperonin of Shewanella sp. (strain MR-4).